The following is a 100-amino-acid chain: Small ribosomal subunit protein uS14c (100 aa).

This sequence belongs to the universal ribosomal protein uS14 family. Part of the 30S ribosomal subunit.

It is found in the plastid. It localises to the chloroplast. In terms of biological role, binds 16S rRNA, required for the assembly of 30S particles. In Pleurastrum terricola (Filamentous green alga), this protein is Small ribosomal subunit protein uS14c.